A 400-amino-acid polypeptide reads, in one-letter code: Ribosomal RNA large subunit methyltransferase I (400 aa).

Residues Phe-6–Glu-84 enclose the PUA domain.

The protein belongs to the methyltransferase superfamily. RlmI family.

Its subcellular location is the cytoplasm. The catalysed reaction is cytidine(1962) in 23S rRNA + S-adenosyl-L-methionine = 5-methylcytidine(1962) in 23S rRNA + S-adenosyl-L-homocysteine + H(+). Its function is as follows. Specifically methylates the cytosine at position 1962 (m5C1962) of 23S rRNA. In Klebsiella pneumoniae (strain 342), this protein is Ribosomal RNA large subunit methyltransferase I.